The primary structure comprises 375 residues: Trichodiene synthase (375 aa).

This sequence belongs to the trichodiene synthase family.

It catalyses the reaction (2E,6E)-farnesyl diphosphate = trichodiene + diphosphate. Its pathway is sesquiterpene biosynthesis; trichothecene biosynthesis. Functionally, TS is a member of the terpene cyclase group of enzymes. It catalyzes the isomerization and cyclization of farnesyl pyro-phosphate to form trichodiene, the first cyclic intermediate in the biosynthetic pathway for trichothecenes. It serves to branch trichothecene biosynthesis from the isoprenoid pathway. In Fusarium pseudograminearum (Wheat and barley crown-rot fungus), this protein is Trichodiene synthase (TRI5).